Reading from the N-terminus, the 397-residue chain is Transcription factor TGAL6 (397 aa).

In terms of domain architecture, bZIP spans 104–148 (PDKVLRRLAQNREAARKSRLRKKAYIQQLETSRLKLAQLEQELQR). The interval 106 to 126 (KVLRRLAQNREAARKSRLRKK) is basic motif. The interval 132-146 (LETSRLKLAQLEQEL) is leucine-zipper. The 216-residue stretch at 175-390 (ALGFEIKYSH…RALSSLWAAR (216 aa)) folds into the DOG1 domain.

The protein belongs to the bZIP family.

It localises to the nucleus. Functionally, transcriptional regulator involved in defense response. This Oryza sativa subsp. japonica (Rice) protein is Transcription factor TGAL6.